A 747-amino-acid chain; its full sequence is Pseudouridine-metabolizing bifunctional protein C1861.05 (747 aa).

Residues 1–379 (MLIVMNRGCR…KVSDKGVSSS (379 aa)) form a pseudouridine-5'-phosphate glycosidase region. The active-site Proton donor; for PsiMP glycosidase activity is E61. The substrate site is built by K123 and V143. D175 provides a ligand contact to Mn(2+). 177 to 179 (SAD) provides a ligand contact to substrate. K196 acts as the Nucleophile; for PsiMP glycosidase activity in catalysis. A pseudouridine kinase region spans residues 380–747 (KKKITETTSK…VNPEIKTLLK (368 aa)).

In the N-terminal section; belongs to the pseudouridine-5'-phosphate glycosidase family. This sequence in the C-terminal section; belongs to the carbohydrate kinase PfkB family. It depends on Mn(2+) as a cofactor.

Its subcellular location is the cytoplasm. It catalyses the reaction D-ribose 5-phosphate + uracil = psi-UMP + H2O. The catalysed reaction is pseudouridine + ATP = psi-UMP + ADP + H(+). Its function is as follows. Bifunctional enzyme that catalyzes the phosphorylation of pseudouridine to pseudouridine 5'-phosphate (PsiMP), and the reversible cleavage of pseudouridine 5'-phosphate to ribose 5-phosphate and uracil. Is involved in a pseudouridine degradation pathway. The protein is Pseudouridine-metabolizing bifunctional protein C1861.05 of Schizosaccharomyces pombe (strain 972 / ATCC 24843) (Fission yeast).